Reading from the N-terminus, the 89-residue chain is Putative regulatory protein MAE_11840 (89 aa).

This sequence belongs to the RemA family.

The sequence is that of Putative regulatory protein MAE_11840 from Microcystis aeruginosa (strain NIES-843 / IAM M-2473).